A 171-amino-acid chain; its full sequence is MKQTSFFIPLLGTLLLYGCAGTSTEFECNATTSDTCMTMEQANEKAKKLERSSEAKPVAASLPRLAEGNFRTMPVQTVTATTPSGSRPAVTAHPEQKLLAPRPLFTAAREVKTVVPVSSVTPVTPPRPLRTGEQTAALWIAPYIDNQDVYHQPSSVFFVIKPSAWGKPRIN.

A signal peptide spans 1 to 18 (MKQTSFFIPLLGTLLLYG). The N-palmitoyl cysteine moiety is linked to residue Cys-19. The S-diacylglycerol cysteine moiety is linked to residue Cys-19.

The protein resides in the cell outer membrane. In terms of biological role, involved in F pilus assembly. Appears to facilitate the polymerization of inner membrane-located pilin subunits into extracellular F pilus filaments. The chain is Protein TraV (traV) from Escherichia coli (strain K12).